The chain runs to 624 residues: 1-deoxy-D-xylulose-5-phosphate synthase (624 aa).

Residues histidine 80 and 121–123 (GHS) each bind thiamine diphosphate. Mg(2+) is bound at residue aspartate 152. Thiamine diphosphate is bound by residues 153–154 (GA), asparagine 181, tyrosine 289, and glutamate 371. Asparagine 181 lines the Mg(2+) pocket.

It belongs to the transketolase family. DXPS subfamily. In terms of assembly, homodimer. Mg(2+) serves as cofactor. The cofactor is thiamine diphosphate.

It carries out the reaction D-glyceraldehyde 3-phosphate + pyruvate + H(+) = 1-deoxy-D-xylulose 5-phosphate + CO2. It participates in metabolic intermediate biosynthesis; 1-deoxy-D-xylulose 5-phosphate biosynthesis; 1-deoxy-D-xylulose 5-phosphate from D-glyceraldehyde 3-phosphate and pyruvate: step 1/1. Catalyzes the acyloin condensation reaction between C atoms 2 and 3 of pyruvate and glyceraldehyde 3-phosphate to yield 1-deoxy-D-xylulose-5-phosphate (DXP). In Blochmanniella pennsylvanica (strain BPEN), this protein is 1-deoxy-D-xylulose-5-phosphate synthase.